The chain runs to 257 residues: MLIIPAIDIKDGKCVRLTRGDFSQKKIYLDNPSDMAIIWRKQNAKMLHIVDLDAALTGEMVNIAAISDIVANVDIPVQVGGGIRSVDAVKSYLDIGVARVIIGSAAVTNPKLVEELMHIYRPSQIVVGIDAENGVPKIKGWLESATMQDYELALRMKEMGIERIIYTDITRDGMMQGIGYESTKRFAEKAGMKVTASGGVTNSSDLHKLEGLRRYGVDSVIVGKALYECNFPCQELWYSFEDEISIDHNFSTARQKS.

Asp-8 acts as the Proton acceptor in catalysis. The Proton donor role is filled by Asp-130.

Belongs to the HisA/HisF family.

Its subcellular location is the cytoplasm. The enzyme catalyses 1-(5-phospho-beta-D-ribosyl)-5-[(5-phospho-beta-D-ribosylamino)methylideneamino]imidazole-4-carboxamide = 5-[(5-phospho-1-deoxy-D-ribulos-1-ylimino)methylamino]-1-(5-phospho-beta-D-ribosyl)imidazole-4-carboxamide. It functions in the pathway amino-acid biosynthesis; L-histidine biosynthesis; L-histidine from 5-phospho-alpha-D-ribose 1-diphosphate: step 4/9. The sequence is that of 1-(5-phosphoribosyl)-5-[(5-phosphoribosylamino)methylideneamino] imidazole-4-carboxamide isomerase from Chlorobium chlorochromatii (strain CaD3).